Reading from the N-terminus, the 120-residue chain is Large ribosomal subunit protein bL12 (120 aa).

The protein belongs to the bacterial ribosomal protein bL12 family. In terms of assembly, homodimer. Part of the ribosomal stalk of the 50S ribosomal subunit. Forms a multimeric L10(L12)X complex, where L10 forms an elongated spine to which 2 to 4 L12 dimers bind in a sequential fashion. Binds GTP-bound translation factors.

Its function is as follows. Forms part of the ribosomal stalk which helps the ribosome interact with GTP-bound translation factors. Is thus essential for accurate translation. In Haemophilus ducreyi (strain 35000HP / ATCC 700724), this protein is Large ribosomal subunit protein bL12.